Reading from the N-terminus, the 478-residue chain is Centromere DNA-binding protein complex CBF3 subunit C (478 aa).

The segment at 206–251 (EVGEEKDVDVSGANSDENSSPSSTIKNKKRSASKRSHSDNGNVGAT) is disordered. Residues 217-230 (GANSDENSSPSSTI) are compositionally biased toward polar residues. Positions 231–240 (KNKKRSASKR) are enriched in basic residues.

Component of the CBF3 copmplex, which is formed of CBF3A/CBF2, CBF3B/CEP3, CBF3C/CTF13 and CBF3D. CBF3C interacts with CBF3D and SGT1.

Its subcellular location is the nucleus. It localises to the chromosome. The protein localises to the centromere. Functionally, acts as a central component of the centromere DNA-binding protein complex CBF3, which is essential for chromosome segregation and movement of centromeres along microtubules. CBF3 is required for the recruitment of other kinetochore complexes to CEN DNA. It plays a role in the attachment of chromosomes to the spindle and binds selectively to a highly conserved DNA sequence called CDEIII, found in centromers and in several promoters. The association of CBF3C with CBF3D and SGT1 is required for CBF3C activation and CBF3 assembly. The polypeptide is Centromere DNA-binding protein complex CBF3 subunit C (CTF13) (Saccharomyces cerevisiae (strain ATCC 204508 / S288c) (Baker's yeast)).